Consider the following 217-residue polypeptide: CASP-like protein UU4 (217 aa).

Residues 1–11 show a composition bias toward basic and acidic residues; sequence MYTGQSDHRPE. Residues 1–21 form a disordered region; that stretch reads MYTGQSDHRPEGVGVNPGSPN. At 1-61 the chain is on the cytoplasmic side; sequence MYTGQSDHRP…VKKNINHMSG (61 aa). The helical transmembrane segment at 62–82 threads the bilayer; sequence LSLGLRVSEFVLSVIAFSLMA. Topologically, residues 83-98 are extracellular; the sequence is SAEQNGAVYSTFTSYS. Residues 99-119 form a helical membrane-spanning segment; sequence FVLAINVLVALYAIGQIILSV. Over 120–141 the chain is Cytoplasmic; it reads MPLVSGSAPKKLYLFITFGCDQ. A helical transmembrane segment spans residues 142–162; that stretch reads LSAFLLMAAGAAGASVAMLIN. The Extracellular portion of the chain corresponds to 163–187; the sequence is RKGVIDDYGSGCIDGKITVFCAHAE. Residues 188–208 form a helical membrane-spanning segment; it reads ASIAFTFLSFFCVMISSYLGV. The Cytoplasmic segment spans residues 209–217; it reads YNLAPYLIL.

It belongs to the Casparian strip membrane proteins (CASP) family. Homodimer and heterodimers.

The protein resides in the cell membrane. The protein is CASP-like protein UU4 of Physcomitrium patens (Spreading-leaved earth moss).